The chain runs to 401 residues: Coenzyme A biosynthesis bifunctional protein CoaBC (401 aa).

The segment at 1 to 190 (MQTLAGKKIL…FQPKPLQDKS (190 aa)) is phosphopantothenoylcysteine decarboxylase. Cys159 (proton donor) is an active-site residue. Residues 191 to 401 (ILITAGPTRE…LKQIQTLMGH (211 aa)) form a phosphopantothenate--cysteine ligase region. CTP-binding positions include Asp279, Lys289, 307–310 (PDIV), Phe326, Lys340, and Lys344.

This sequence in the N-terminal section; belongs to the HFCD (homo-oligomeric flavin containing Cys decarboxylase) superfamily. In the C-terminal section; belongs to the PPC synthetase family. Requires Mg(2+) as cofactor. FMN serves as cofactor.

The catalysed reaction is N-[(R)-4-phosphopantothenoyl]-L-cysteine + H(+) = (R)-4'-phosphopantetheine + CO2. It catalyses the reaction (R)-4'-phosphopantothenate + L-cysteine + CTP = N-[(R)-4-phosphopantothenoyl]-L-cysteine + CMP + diphosphate + H(+). Its pathway is cofactor biosynthesis; coenzyme A biosynthesis; CoA from (R)-pantothenate: step 2/5. It participates in cofactor biosynthesis; coenzyme A biosynthesis; CoA from (R)-pantothenate: step 3/5. In terms of biological role, catalyzes two sequential steps in the biosynthesis of coenzyme A. In the first step cysteine is conjugated to 4'-phosphopantothenate to form 4-phosphopantothenoylcysteine. In the second step the latter compound is decarboxylated to form 4'-phosphopantotheine. This is Coenzyme A biosynthesis bifunctional protein CoaBC from Vibrio vulnificus (strain CMCP6).